The sequence spans 373 residues: Alanine racemase (373 aa).

Lysine 37 functions as the Proton acceptor; specific for D-alanine in the catalytic mechanism. Lysine 37 bears the N6-(pyridoxal phosphate)lysine mark. Arginine 135 is a substrate binding site. Catalysis depends on tyrosine 266, which acts as the Proton acceptor; specific for L-alanine. Methionine 313 serves as a coordination point for substrate.

This sequence belongs to the alanine racemase family. The cofactor is pyridoxal 5'-phosphate.

It catalyses the reaction L-alanine = D-alanine. It functions in the pathway amino-acid biosynthesis; D-alanine biosynthesis; D-alanine from L-alanine: step 1/1. Functionally, catalyzes the interconversion of L-alanine and D-alanine. This organism is able to use both L- and D-alanine as a nitrogen source. May also prevent D-alanine from interfering with the use of L-alanine. This Methanococcus maripaludis (strain DSM 14266 / JCM 13030 / NBRC 101832 / S2 / LL) protein is Alanine racemase (alr).